Reading from the N-terminus, the 800-residue chain is DNA topoisomerase 4 subunit A (800 aa).

The Topo IIA-type catalytic domain occupies L31 to V496. Y119 (O-(5'-phospho-DNA)-tyrosine intermediate) is an active-site residue.

Belongs to the type II topoisomerase GyrA/ParC subunit family. ParC type 2 subfamily. As to quaternary structure, heterotetramer composed of ParC and ParE.

It is found in the cell membrane. It catalyses the reaction ATP-dependent breakage, passage and rejoining of double-stranded DNA.. Topoisomerase IV is essential for chromosome segregation. It relaxes supercoiled DNA. Performs the decatenation events required during the replication of a circular DNA molecule. This is DNA topoisomerase 4 subunit A from Staphylococcus epidermidis (strain ATCC 12228 / FDA PCI 1200).